We begin with the raw amino-acid sequence, 951 residues long: Leucine-rich repeat-containing G-protein coupled receptor 4 (951 aa).

An N-terminal signal peptide occupies residues 1–19 (MPGPLGLLCFLALGLRGSA). At 20–544 (EPSGAAPPLC…LLGSWMIRLT (525 aa)) the chain is on the extracellular side. An LRRNT domain is found at 25–57 (APPLCAAPCSCDGDRRVDCSGKGLTAVPEGLSA). 2 disulfides stabilise this stretch: Cys29/Cys35 and Cys33/Cys43. LRR repeat units lie at residues 35-58 (CDGD…LSAF), 59-79 (TQLL…AFKN), 81-103 (PFLE…ALSG), 104-127 (LKEL…AIRG), 128-151 (LSSL…SFEG), 153-175 (TQLR…PLSN), 176-199 (LPTL…AFTN), 201-223 (SSLV…CFDG), 224-247 (LDNL…IKAL), 248-270 (PSLK…AFDG), and 272-294 (PLLK…AFHN). Asn68 carries an N-linked (GlcNAc...) asparagine glycan. N-linked (GlcNAc...) asparagine glycosylation is present at Asn199. N-linked (GlcNAc...) asparagine glycans are attached at residues Asn294 and Asn314. LRR repeat units lie at residues 318-341 (TVRL…LCQE), 342-363 (QKRL…SFNG), 364-387 (CHAL…TFQG), 388-411 (LTSL…AFAK), and 413-435 (GSIT…GLNG). Cys339 and Cys364 are disulfide-bonded. Cystine bridges form between Cys470/Cys522 and Cys471/Cys476. A helical transmembrane segment spans residues 545–565 (VWFIFLVALFFNLLVILTTFA). Topologically, residues 566 to 575 (SCTSVPSSKL) are cytoplasmic. The helical transmembrane segment at 576–596 (FIGLISVSNLFMGAYTGILTF) threads the bilayer. Residues 597–619 (LDAVSWGRFAEFGIWWEIGSGCK) lie on the Extracellular side of the membrane. A disulfide bridge links Cys618 with Cys693. A helical membrane pass occupies residues 620–640 (IAGFLAVFSSESAIFLLMLAA). Over 641–661 (VERSLSAKDMMKNGKSNHLRQ) the chain is Cytoplasmic. The helical transmembrane segment at 662 to 682 (FRIAALLAFLGAAVAGSFPLF) threads the bilayer. The Extracellular segment spans residues 683 to 703 (HRGEYSASPLCLPFPTGETPS). Residues 704–724 (LGFTVTLVLLNSLAFLLMAII) traverse the membrane as a helical segment. The Cytoplasmic segment spans residues 725–756 (YTKLYCNLEKEDLSESSQSSMIKHVAWLIFTN). Residues 757–777 (CIFFCPVAFFSFAPLITAVSI) form a helical membrane-spanning segment. Over 778 to 783 (SPEIMK) the chain is Extracellular. A helical membrane pass occupies residues 784–804 (SVTLIFFPLPACLNPVLYVFF). At 805-951 (NPKFKEDWKL…YAYNLPRVKD (147 aa)) the chain is on the cytoplasmic side. A Phosphoserine modification is found at Ser920.

The protein belongs to the G-protein coupled receptor 1 family.

It is found in the cell membrane. Functionally, receptor for R-spondins that potentiates the canonical Wnt signaling pathway and is involved in the formation of various organs. Upon binding to R-spondins (RSPO1, RSPO2, RSPO3 or RSPO4), associates with phosphorylated LRP6 and frizzled receptors that are activated by extracellular Wnt receptors, triggering the canonical Wnt signaling pathway to increase expression of target genes. In contrast to classical G-protein coupled receptors, does not activate heterotrimeric G-proteins to transduce the signal. Its function as activator of the Wnt signaling pathway is required for the development of various organs, including liver, kidney, intestine, bone, reproductive tract and eye. May also act as a receptor for norrin (NDP), such results however required additional confirmation in vivo. Required during spermatogenesis to activate the Wnt signaling pathway in peritubular myoid cells. Required for the maintenance of intestinal stem cells and Paneth cell differentiation in postnatal intestinal crypts. Acts as a regulator of bone formation and remodeling. Involved in kidney development; required for maintaining the ureteric bud in an undifferentiated state. Involved in the development of the anterior segment of the eye. Required during erythropoiesis. Also acts as a negative regulator of innate immunity by inhibiting TLR2/TLR4 associated pattern-recognition and pro-inflammatory cytokine production. Plays an important role in regulating the circadian rhythms of plasma lipids, partially through regulating the rhythmic expression of MTTP. Required for proper development of GnRH neurons (gonadotropin-releasing hormone expressing neurons) that control the release of reproductive hormones from the pituitary gland. In Bos taurus (Bovine), this protein is Leucine-rich repeat-containing G-protein coupled receptor 4 (LGR4).